Here is a 63-residue protein sequence, read N- to C-terminus: Lantibiotic mutacin-1140 (63 aa).

A propeptide spanning residues 1–41 (MSNTQLLEVLGTETFDVQEDLFAFDTTDTTIVASNDDPDTR) is cleaved from the precursor. A cross-link (lanthionine (Ser-Cys)) is located at residues 44-48 (SWSLC). Ser-46 is subject to 2,3-didehydroalanine (Ser). The segment at residues 49–52 (TPGC) is a cross-link (beta-methyllanthionine (Thr-Cys)). At Thr-55 the chain carries 2,3-didehydrobutyrine. The segment at residues 57-62 (SFNSYC) is a cross-link (lanthionine (Ser-Cys)). Positions 60 to 63 (SYCC) form a cross-link, S-(2-aminovinyl)-D-cysteine (Ser-Cys).

Belongs to the type A lantibiotic family. In terms of processing, maturation of lantibiotics involves the enzymatic conversion of Thr, and Ser into dehydrated AA and the formation of thioether bonds with cysteine. The C-terminal lanthionine undergoes decarboxylation. This is followed by membrane translocation and cleavage of the modified precursor. Post-translationally, the structure of the 2,3-didehydrobutyrine is not discussed in PubMed:11082191.

Functionally, lanthionine-containing peptide antibiotic (lantibiotic) active on Gram-positive bacteria. The bactericidal activity of lantibiotics is based on depolarization of energized bacterial cytoplasmic membranes, initiated by the formation of aqueous transmembrane pores. The polypeptide is Lantibiotic mutacin-1140 (lanA) (Streptococcus mutans).